The sequence spans 102 residues: NADH-quinone oxidoreductase subunit K (102 aa).

Transmembrane regions (helical) follow at residues 5–25 (LGHY…GIFL), 31–51 (IVLL…FVAF), and 62–82 (VFVF…LAIL).

Belongs to the complex I subunit 4L family. NDH-1 is composed of 14 different subunits. Subunits NuoA, H, J, K, L, M, N constitute the membrane sector of the complex.

The protein resides in the cell inner membrane. The catalysed reaction is a quinone + NADH + 5 H(+)(in) = a quinol + NAD(+) + 4 H(+)(out). NDH-1 shuttles electrons from NADH, via FMN and iron-sulfur (Fe-S) centers, to quinones in the respiratory chain. The immediate electron acceptor for the enzyme in this species is believed to be ubiquinone. Couples the redox reaction to proton translocation (for every two electrons transferred, four hydrogen ions are translocated across the cytoplasmic membrane), and thus conserves the redox energy in a proton gradient. This Methylibium petroleiphilum (strain ATCC BAA-1232 / LMG 22953 / PM1) protein is NADH-quinone oxidoreductase subunit K.